The chain runs to 514 residues: Ribonuclease Y (514 aa).

The chain crosses the membrane as a helical span at residues 2 to 22; sequence EDLIVAIVVGAFSSAISIFVV. The region spanning 204–268 is the KH domain; sequence LINNIPLNDE…VATKTIRELL (65 aa). An HD domain is found at 330–423; that stretch reads ALAHTLEVAH…VCAADALSAA (94 aa).

It belongs to the RNase Y family.

It localises to the cell membrane. Functionally, endoribonuclease that initiates mRNA decay. The sequence is that of Ribonuclease Y from Aliarcobacter butzleri (strain RM4018) (Arcobacter butzleri).